Here is a 405-residue protein sequence, read N- to C-terminus: Nicotinate phosphoribosyltransferase (405 aa).

Histidine 224 is modified (phosphohistidine; by autocatalysis).

Belongs to the NAPRTase family. Transiently phosphorylated on a His residue during the reaction cycle. Phosphorylation strongly increases the affinity for substrates and increases the rate of nicotinate D-ribonucleotide production. Dephosphorylation regenerates the low-affinity form of the enzyme, leading to product release.

It carries out the reaction nicotinate + 5-phospho-alpha-D-ribose 1-diphosphate + ATP + H2O = nicotinate beta-D-ribonucleotide + ADP + phosphate + diphosphate. The protein operates within cofactor biosynthesis; NAD(+) biosynthesis; nicotinate D-ribonucleotide from nicotinate: step 1/1. In terms of biological role, catalyzes the synthesis of beta-nicotinate D-ribonucleotide from nicotinate and 5-phospho-D-ribose 1-phosphate at the expense of ATP. In Methanococcoides burtonii (strain DSM 6242 / NBRC 107633 / OCM 468 / ACE-M), this protein is Nicotinate phosphoribosyltransferase.